The following is a 212-amino-acid chain: uncharacterized protein (212 aa).

The chain crosses the membrane as a helical span at residues valine 186–valine 206.

The protein localises to the membrane. This is an uncharacterized protein from Mycoplasma genitalium (strain ATCC 33530 / DSM 19775 / NCTC 10195 / G37) (Mycoplasmoides genitalium).